The following is a 312-amino-acid chain: MKTFAETAKAYLALTKPRVIELLLVATIPAMLQAARGEVNFGLILLTLIGGWMGAGAANTFNNVVDHDIDQLMRRTRRRPTARQTVSVGEARVFAWVLLIASVLWLGFLCHSWLAAGFIVLTNWFYVFVYTKWLKRRTWQNVIWGGAAGCMPVIVGWAVITDNNGGAFHAGWSSWLQAIILFMIIFFWTPPHTWALGMRYREDYEAAGVPMMPVVKPPLQVTRQILAYTWAAVITSLLLVPAASWIYLAAALISGGWFIIKAHMLHQGVKNGTPVKPMQLFFLSNNYLSILFVALSVDAVLGWQTLAHAVLG.

Helical transmembrane passes span 12 to 32, 41 to 61, 93 to 113, 114 to 134, 141 to 161, 168 to 188, 240 to 260, and 290 to 310; these read LALT…PAML, FGLI…ANTF, VFAW…CHSW, LAAG…TKWL, NVIW…AVIT, FHAG…IFFW, VPAA…WFII, and ILFV…AHAV.

The protein belongs to the UbiA prenyltransferase family. Protoheme IX farnesyltransferase subfamily.

The protein resides in the cell membrane. The enzyme catalyses heme b + (2E,6E)-farnesyl diphosphate + H2O = Fe(II)-heme o + diphosphate. Its pathway is porphyrin-containing compound metabolism; heme O biosynthesis; heme O from protoheme: step 1/1. In terms of biological role, converts heme B (protoheme IX) to heme O by substitution of the vinyl group on carbon 2 of heme B porphyrin ring with a hydroxyethyl farnesyl side group. The protein is Protoheme IX farnesyltransferase of Corynebacterium jeikeium (strain K411).